The following is a 124-amino-acid chain: Glutaredoxin-2 (124 aa).

Residues Cys13 and Cys16 are joined by a disulfide bond.

The protein belongs to the glutaredoxin family. As to quaternary structure, homodimer.

The protein resides in the host cytoplasm. Glutaredoxin necessary for virion morphogenesis and virus replication. Functions as a thiol-disulfide transfer protein between membrane-associated OPG128 and substrates OPG095 or OPG053. The complete pathway for formation of disulfide bonds in intracellular virion membrane proteins sequentially involves oxidation of OPG072, OPG128 and OPG088. Exhibit thioltransferase and dehydroascorbate reductase activities in vitro. In Homo sapiens (Human), this protein is Glutaredoxin-2 (OPG088).